A 95-amino-acid chain; its full sequence is Aspartyl/glutamyl-tRNA(Asn/Gln) amidotransferase subunit C (95 aa).

It belongs to the GatC family. As to quaternary structure, heterotrimer of A, B and C subunits.

The catalysed reaction is L-glutamyl-tRNA(Gln) + L-glutamine + ATP + H2O = L-glutaminyl-tRNA(Gln) + L-glutamate + ADP + phosphate + H(+). It carries out the reaction L-aspartyl-tRNA(Asn) + L-glutamine + ATP + H2O = L-asparaginyl-tRNA(Asn) + L-glutamate + ADP + phosphate + 2 H(+). Functionally, allows the formation of correctly charged Asn-tRNA(Asn) or Gln-tRNA(Gln) through the transamidation of misacylated Asp-tRNA(Asn) or Glu-tRNA(Gln) in organisms which lack either or both of asparaginyl-tRNA or glutaminyl-tRNA synthetases. The reaction takes place in the presence of glutamine and ATP through an activated phospho-Asp-tRNA(Asn) or phospho-Glu-tRNA(Gln). The protein is Aspartyl/glutamyl-tRNA(Asn/Gln) amidotransferase subunit C of Allorhizobium ampelinum (strain ATCC BAA-846 / DSM 112012 / S4) (Agrobacterium vitis (strain S4)).